The chain runs to 125 residues: Small ribosomal subunit protein uS12 (125 aa).

Position 89 is a 3-methylthioaspartic acid (Asp89).

Belongs to the universal ribosomal protein uS12 family. In terms of assembly, part of the 30S ribosomal subunit. Contacts proteins S8 and S17. May interact with IF1 in the 30S initiation complex.

Its function is as follows. With S4 and S5 plays an important role in translational accuracy. Interacts with and stabilizes bases of the 16S rRNA that are involved in tRNA selection in the A site and with the mRNA backbone. Located at the interface of the 30S and 50S subunits, it traverses the body of the 30S subunit contacting proteins on the other side and probably holding the rRNA structure together. The combined cluster of proteins S8, S12 and S17 appears to hold together the shoulder and platform of the 30S subunit. The sequence is that of Small ribosomal subunit protein uS12 from Ralstonia nicotianae (strain ATCC BAA-1114 / GMI1000) (Ralstonia solanacearum).